The primary structure comprises 106 residues: UPF0145 protein CLH_2273 (106 aa).

Belongs to the UPF0145 family.

The polypeptide is UPF0145 protein CLH_2273 (Clostridium botulinum (strain Alaska E43 / Type E3)).